The sequence spans 346 residues: Phosphoribosylformylglycinamidine cyclo-ligase (346 aa).

It belongs to the AIR synthase family.

The protein localises to the cytoplasm. The enzyme catalyses 2-formamido-N(1)-(5-O-phospho-beta-D-ribosyl)acetamidine + ATP = 5-amino-1-(5-phospho-beta-D-ribosyl)imidazole + ADP + phosphate + H(+). It participates in purine metabolism; IMP biosynthesis via de novo pathway; 5-amino-1-(5-phospho-D-ribosyl)imidazole from N(2)-formyl-N(1)-(5-phospho-D-ribosyl)glycinamide: step 2/2. In Bacillus cereus (strain G9842), this protein is Phosphoribosylformylglycinamidine cyclo-ligase.